Consider the following 438-residue polypeptide: Serine hydroxymethyltransferase (438 aa).

(6S)-5,6,7,8-tetrahydrofolate is bound by residues L135 and 139–141 (GHL). Residue K244 is modified to N6-(pyridoxal phosphate)lysine. The tract at residues 361–383 (GVPNDPLPPVKTSGIRVGSPAGT) is disordered.

The protein belongs to the SHMT family. As to quaternary structure, homodimer. Pyridoxal 5'-phosphate serves as cofactor.

The protein resides in the cytoplasm. The catalysed reaction is (6R)-5,10-methylene-5,6,7,8-tetrahydrofolate + glycine + H2O = (6S)-5,6,7,8-tetrahydrofolate + L-serine. Its pathway is one-carbon metabolism; tetrahydrofolate interconversion. The protein operates within amino-acid biosynthesis; glycine biosynthesis; glycine from L-serine: step 1/1. Functionally, catalyzes the reversible interconversion of serine and glycine with tetrahydrofolate (THF) serving as the one-carbon carrier. This reaction serves as the major source of one-carbon groups required for the biosynthesis of purines, thymidylate, methionine, and other important biomolecules. Also exhibits THF-independent aldolase activity toward beta-hydroxyamino acids, producing glycine and aldehydes, via a retro-aldol mechanism. In Rhizorhabdus wittichii (strain DSM 6014 / CCUG 31198 / JCM 15750 / NBRC 105917 / EY 4224 / RW1) (Sphingomonas wittichii), this protein is Serine hydroxymethyltransferase.